The following is a 238-amino-acid chain: ATP synthase subunit a (238 aa).

Transmembrane regions (helical) follow at residues 15–35 (IFNL…FVFI), 76–96 (YSLF…LGLM), 111–131 (PTAN…LTHI), 167–187 (LALR…LLLL), and 208–230 (AFSV…VYLG).

This sequence belongs to the ATPase A chain family. In terms of assembly, F-type ATPases have 2 components, CF(1) - the catalytic core - and CF(0) - the membrane proton channel. CF(1) has five subunits: alpha(3), beta(3), gamma(1), delta(1), epsilon(1). CF(0) has three main subunits: a(1), b(2) and c(9-12). The alpha and beta chains form an alternating ring which encloses part of the gamma chain. CF(1) is attached to CF(0) by a central stalk formed by the gamma and epsilon chains, while a peripheral stalk is formed by the delta and b chains.

It localises to the cell membrane. Key component of the proton channel; it plays a direct role in the translocation of protons across the membrane. This Streptococcus pneumoniae (strain ATCC BAA-255 / R6) protein is ATP synthase subunit a.